The sequence spans 981 residues: Lateral signaling target protein 2 homolog (981 aa).

The tract at residues 308-462 (PLGSSSIEAP…LESSDDDTDE (155 aa)) is disordered. Composition is skewed to low complexity over residues 326-356 (TTSSSQNNNNSSNNNHSSSSTTTTTMGTTNT), 369-380 (NNHNSNSNSSTN), 390-404 (SPSMLSLSATSTPTA), and 412-433 (PSHSIDSTSSAATSSTNPPADW). The span at 434 to 462 (SDGDDEDEDDDDIEVDEEDLESSDDDTDE) shows a compositional bias: acidic residues. Ser544 and Ser545 each carry phosphoserine. Disordered stretches follow at residues 561–642 (EQMQ…SSLS) and 749–897 (DNVF…SPPA). A compositionally biased stretch (basic residues) spans 576-611 (HSHRHHQRHHHHHHHRHSHQHRQPHPHRTTRSGRKR). Low complexity predominate over residues 630 to 642 (LASGDTSAASSLS). Polar residues predominate over residues 760–791 (ATGQRHSAGASMQRNNTIDLASQSGEGSPSGA). Ser805 is subject to Phosphoserine. 2 stretches are compositionally biased toward low complexity: residues 811-866 (AASS…PVSA) and 883-896 (PSSATSTSATLSPP). Residues 901–961 (DGKAPRCMAC…VCRDCYVREV (61 aa)) form an FYVE-type zinc finger. Zn(2+) contacts are provided by Cys907, Cys910, Cys923, Cys926, Cys931, Cys934, Cys953, and Cys956.

This sequence belongs to the lst-2 family.

In terms of biological role, negative regulator of epidermal growth factor receptor (EGFR) signaling. The polypeptide is Lateral signaling target protein 2 homolog (Drosophila erecta (Fruit fly)).